A 156-amino-acid polypeptide reads, in one-letter code: Small ribosomal subunit protein uS7 (156 aa).

Belongs to the universal ribosomal protein uS7 family. In terms of assembly, part of the 30S ribosomal subunit. Contacts proteins S9 and S11.

Functionally, one of the primary rRNA binding proteins, it binds directly to 16S rRNA where it nucleates assembly of the head domain of the 30S subunit. Is located at the subunit interface close to the decoding center, probably blocks exit of the E-site tRNA. In Deinococcus deserti (strain DSM 17065 / CIP 109153 / LMG 22923 / VCD115), this protein is Small ribosomal subunit protein uS7.